Consider the following 122-residue polypeptide: Histone H2B 1 (122 aa).

The segment at 1 to 30 is disordered; it reads MPPKPSAKGAKKAAKTVTKPKDGKKRRHAR. A glycan (O-linked (GlcNAc) serine) is linked at Ser109. Lys117 is covalently cross-linked (Glycyl lysine isopeptide (Lys-Gly) (interchain with G-Cter in ubiquitin)).

It belongs to the histone H2B family. As to quaternary structure, the nucleosome is a histone octamer containing two molecules each of H2A, H2B, H3 and H4 assembled in one H3-H4 heterotetramer and two H2A-H2B heterodimers. The octamer wraps approximately 147 bp of DNA. In terms of processing, monoubiquitination of Lys-117 gives a specific tag for epigenetic transcriptional activation and is also prerequisite for histone H3 'Lys-4' and 'Lys-79' methylation. Post-translationally, glcNAcylation at Ser-109 promotes monoubiquitination of Lys-117. It fluctuates in response to extracellular glucose, and associates with transcribed genes.

The protein resides in the nucleus. Its subcellular location is the chromosome. Core component of nucleosome. Nucleosomes wrap and compact DNA into chromatin, limiting DNA accessibility to the cellular machineries which require DNA as a template. Histones thereby play a central role in transcription regulation, DNA repair, DNA replication and chromosomal stability. DNA accessibility is regulated via a complex set of post-translational modifications of histones, also called histone code, and nucleosome remodeling. This chain is Histone H2B 1 (his-11), found in Caenorhabditis elegans.